A 49-amino-acid chain; its full sequence is MLQLMKQLYEKPAVKWTCHTGFYLMILLVLFFMYGFHTANTGSYIYNDF.

The chain crosses the membrane as a helical span at residues Trp-16–Phe-36.

It is found in the cell membrane. This is an uncharacterized protein from Bacillus subtilis (strain 168).